The sequence spans 558 residues: Glucose-6-phosphate isomerase (558 aa).

Glu-362 acts as the Proton donor in catalysis. Active-site residues include His-393 and Lys-523.

The protein belongs to the GPI family.

It localises to the cytoplasm. It catalyses the reaction alpha-D-glucose 6-phosphate = beta-D-fructose 6-phosphate. The protein operates within carbohydrate degradation; glycolysis; D-glyceraldehyde 3-phosphate and glycerone phosphate from D-glucose: step 2/4. This chain is Glucose-6-phosphate isomerase (Pgi), found in Drosophila melanogaster (Fruit fly).